Consider the following 295-residue polypeptide: MPENLQLVIITGMSGAGKTVAVQSFEDMGYFCIDNLPPSLIPKFWELIKESGKVTKIALVIDLRSRTFFREIQDMLVELENTNFIDTTILFLDATDEELVSRYKETRRAHPMAMDGLVTEGIRKERAMLEEIKADAQLVIDTTDLSPRQLRERLNKELATRETHEFRVEMVSFGFKYGLPIDADIVMDVRFLPNPHYIDELRPLTGMDQPVYDYVMGFPETDEFYTKFIDLLRTVLPGYKKEGKSSVTIAIGCTGGQHRSVALTERVGAELKEEDYHVNITHRDRLKRKETVNRS.

12–19 (GMSGAGKT) contacts ATP. Residue 62–65 (DLRS) coordinates GTP.

Belongs to the RapZ-like family.

In terms of biological role, displays ATPase and GTPase activities. This chain is Nucleotide-binding protein EF_0766, found in Enterococcus faecalis (strain ATCC 700802 / V583).